Here is a 171-residue protein sequence, read N- to C-terminus: ATP synthase subunit b (171 aa).

A helical membrane pass occupies residues 14 to 34 (LGDMLFIGISFIVLMALISVV). The segment covering 56–97 (SAQKSRQEASDLADQRRDALSHSRAEASEIVADAKKSGEKQR) has biased composition (basic and acidic residues). The interval 56–104 (SAQKSRQEASDLADQRRDALSHSRAEASEIVADAKKSGEKQRSSIVADA) is disordered.

Belongs to the ATPase B chain family. In terms of assembly, F-type ATPases have 2 components, F(1) - the catalytic core - and F(0) - the membrane proton channel. F(1) has five subunits: alpha(3), beta(3), gamma(1), delta(1), epsilon(1). F(0) has three main subunits: a(1), b(2) and c(10-14). The alpha and beta chains form an alternating ring which encloses part of the gamma chain. F(1) is attached to F(0) by a central stalk formed by the gamma and epsilon chains, while a peripheral stalk is formed by the delta and b chains.

It localises to the cell membrane. Its function is as follows. F(1)F(0) ATP synthase produces ATP from ADP in the presence of a proton or sodium gradient. F-type ATPases consist of two structural domains, F(1) containing the extramembraneous catalytic core and F(0) containing the membrane proton channel, linked together by a central stalk and a peripheral stalk. During catalysis, ATP synthesis in the catalytic domain of F(1) is coupled via a rotary mechanism of the central stalk subunits to proton translocation. Component of the F(0) channel, it forms part of the peripheral stalk, linking F(1) to F(0). This Lactiplantibacillus plantarum (strain ATCC BAA-793 / NCIMB 8826 / WCFS1) (Lactobacillus plantarum) protein is ATP synthase subunit b.